Reading from the N-terminus, the 241-residue chain is ATP synthase subunit a (241 aa).

7 helical membrane passes run 29–49, 86–106, 114–134, 144–164, 177–197, 200–220, and 221–241; these read NSSLFMMISVVSVILFLLLGV, IPLVFTVFTFTLSCNLVGMLP, HVIVTFALSMIVFTYTTIVGF, ILLPEGIPSWLAPMMVFIKLF, LAANMIAGHTIIKVVAGFIMN, LILTPIPFLFIIALIGFEVFV, and AILQAYIFTILTCIYLSDAVK.

Belongs to the ATPase A chain family. In terms of assembly, F-type ATPases have 2 components, CF(1) - the catalytic core - and CF(0) - the membrane proton channel. CF(1) has five subunits: alpha(3), beta(3), gamma(1), delta(1), epsilon(1). CF(0) has three main subunits: a(1), b(2) and c(9-12). The alpha and beta chains form an alternating ring which encloses part of the gamma chain. CF(1) is attached to CF(0) by a central stalk formed by the gamma and epsilon chains, while a peripheral stalk is formed by the delta and b chains.

Its subcellular location is the cell membrane. Key component of the proton channel; it plays a direct role in the translocation of protons across the membrane. This Wolbachia sp. subsp. Brugia malayi (strain TRS) protein is ATP synthase subunit a.